Reading from the N-terminus, the 281-residue chain is Pantothenate synthetase (281 aa).

An ATP-binding site is contributed by 30 to 37; it reads MGYLHEGH. Residue His37 is the Proton donor of the active site. Gln61 is a binding site for (R)-pantoate. Gln61 contacts beta-alanine. Position 147 to 150 (147 to 150) interacts with ATP; that stretch reads GEKD. A (R)-pantoate-binding site is contributed by Gln153. ATP contacts are provided by residues Ile176 and 184–187; that span reads KSSR.

This sequence belongs to the pantothenate synthetase family. As to quaternary structure, homodimer.

Its subcellular location is the cytoplasm. It carries out the reaction (R)-pantoate + beta-alanine + ATP = (R)-pantothenate + AMP + diphosphate + H(+). It participates in cofactor biosynthesis; (R)-pantothenate biosynthesis; (R)-pantothenate from (R)-pantoate and beta-alanine: step 1/1. Its function is as follows. Catalyzes the condensation of pantoate with beta-alanine in an ATP-dependent reaction via a pantoyl-adenylate intermediate. This is Pantothenate synthetase from Clostridium botulinum (strain 657 / Type Ba4).